The primary structure comprises 112 residues: Putative pterin-4-alpha-carbinolamine dehydratase (112 aa).

Belongs to the pterin-4-alpha-carbinolamine dehydratase family.

It catalyses the reaction (4aS,6R)-4a-hydroxy-L-erythro-5,6,7,8-tetrahydrobiopterin = (6R)-L-erythro-6,7-dihydrobiopterin + H2O. The polypeptide is Putative pterin-4-alpha-carbinolamine dehydratase (Dechloromonas aromatica (strain RCB)).